We begin with the raw amino-acid sequence, 209 residues long: Large ribosomal subunit protein uL3 (209 aa).

Gln150 is subject to N5-methylglutamine.

This sequence belongs to the universal ribosomal protein uL3 family. In terms of assembly, part of the 50S ribosomal subunit. Forms a cluster with proteins L14 and L19. Methylated by PrmB.

In terms of biological role, one of the primary rRNA binding proteins, it binds directly near the 3'-end of the 23S rRNA, where it nucleates assembly of the 50S subunit. The protein is Large ribosomal subunit protein uL3 of Proteus mirabilis (strain HI4320).